The primary structure comprises 710 residues: Early transcription factor 82 kDa subunit (710 aa).

Belongs to the poxviridae VETF large subunit family. Heterodimer of a 70 kDa and a 82 kDa subunit. Part of the early transcription complex composed of ETF, RAP94/OPG109, and the DNA-directed RNA polymerase.

The protein resides in the virion. Its function is as follows. Acts with RNA polymerase to initiate transcription from early gene promoters. Is recruited by the RPO-associated protein of 94 kDa RAP94/OPG109 to form the early transcription complex, which also contains the core RNA polymerase. ETF heterodimer binds to early gene promoters. This is Early transcription factor 82 kDa subunit (OPG133) from Variola virus (isolate Human/India/Ind3/1967) (VARV).